The sequence spans 126 residues: Small ribosomal subunit protein uS12 (126 aa).

At Asp-89 the chain carries 3-methylthioaspartic acid.

This sequence belongs to the universal ribosomal protein uS12 family. In terms of assembly, part of the 30S ribosomal subunit. Contacts proteins S8 and S17. May interact with IF1 in the 30S initiation complex.

Functionally, with S4 and S5 plays an important role in translational accuracy. Its function is as follows. Interacts with and stabilizes bases of the 16S rRNA that are involved in tRNA selection in the A site and with the mRNA backbone. Located at the interface of the 30S and 50S subunits, it traverses the body of the 30S subunit contacting proteins on the other side and probably holding the rRNA structure together. The combined cluster of proteins S8, S12 and S17 appears to hold together the shoulder and platform of the 30S subunit. The sequence is that of Small ribosomal subunit protein uS12 from Sulfurimonas denitrificans (strain ATCC 33889 / DSM 1251) (Thiomicrospira denitrificans (strain ATCC 33889 / DSM 1251)).